The sequence spans 343 residues: Labda-7,13(16),14-triene synthase (343 aa).

2 residues coordinate Mg(2+): Asp114 and Glu119. The DDXXXE motif signature appears at 114-119; that stretch reads DDVHVE. Arg206 is a substrate binding site. Residues Asn252, Ser256, and Glu260 each contribute to the Mg(2+) site. The NXXXSXXXE motif signature appears at 252-260; it reads NDLYSFAYE.

It belongs to the terpene synthase family. Requires Mg(2+) as cofactor.

It catalyses the reaction (13E)-labda-7,13-dien-15-yl diphosphate = labda-7,13(16),14-triene + diphosphate. Its function is as follows. Involved in the biosynthesis of the labdane-type bicyclic diterpene labda-7,13(16),14-triene. Catalyzes the conversion of labda-7,13(E)-dienyl diphosphate to yield labda-7,13(16),14-triene. This Streptomyces clavuligerus protein is Labda-7,13(16),14-triene synthase.